Here is a 203-residue protein sequence, read N- to C-terminus: dITP/XTP pyrophosphatase (203 aa).

Substrate is bound at residue 15-20; sequence SGNAGK. Residues Glu45 and Asp74 each contribute to the Mg(2+) site. The Proton acceptor role is filled by Asp74. Substrate-binding positions include Ser75, 153–156, Lys176, and 181–182; these read FGYD and HR.

This sequence belongs to the HAM1 NTPase family. In terms of assembly, homodimer. Requires Mg(2+) as cofactor.

The enzyme catalyses XTP + H2O = XMP + diphosphate + H(+). It carries out the reaction dITP + H2O = dIMP + diphosphate + H(+). The catalysed reaction is ITP + H2O = IMP + diphosphate + H(+). Its function is as follows. Pyrophosphatase that catalyzes the hydrolysis of nucleoside triphosphates to their monophosphate derivatives, with a high preference for the non-canonical purine nucleotides XTP (xanthosine triphosphate), dITP (deoxyinosine triphosphate) and ITP. Seems to function as a house-cleaning enzyme that removes non-canonical purine nucleotides from the nucleotide pool, thus preventing their incorporation into DNA/RNA and avoiding chromosomal lesions. This Prochlorococcus marinus (strain MIT 9313) protein is dITP/XTP pyrophosphatase.